We begin with the raw amino-acid sequence, 606 residues long: MTIKQLSETLINQIAAGEVIERPASAAKELIENALDAGATRIEIATAGGGKALLRVSDNGSGMEQADLELAIKRHCTSKISDTLDDIRTLGFRGEALPSIGSVARLSIASRRVGSAGGAEIAVAGGKVLHLRPAAANPGTIVEVRDLFFATPARLKFLKTEKAEAAAITEVVKRMAIAFPQVRFVLSGSDRSTLEFPATGDDRLARMAQVLGKDFKDNAIELDAEREDVRLTGFAGVPTFNRGNSAHQYAFVNGRPVQDKLILSAIRGAYAETIPSGRYPIAVLSITLDPALLDVNVHPAKSDVRFRDPGLVRGLIVGAIREALAREGDRAATTGADGMLRAFTSGFQPGWRPSAPSAPWTPEASPSRPYQPAVTNGYSFRERPQAAFDGLTMPTARAESTPFVEPTQSEEPARFPLGAARAQLHENYIVAQTDDGLVIVDQHAAHERLVFEEMRKALHSKRLSSQVLLIPEIVDLPEEDCDRLMVFADELGELGLAIERFGPGAIAVRETPAMLGEVDAQGLIRQLADEIAEWDTASGLAAKLEYVAATMACHGSVRSGRRLRPEEMNALLRQMEATPGSGQCNHGRPTYIELKLSDIERLFGRS.

The tract at residues 350–371 (GWRPSAPSAPWTPEASPSRPYQ) is disordered.

This sequence belongs to the DNA mismatch repair MutL/HexB family.

This protein is involved in the repair of mismatches in DNA. It is required for dam-dependent methyl-directed DNA mismatch repair. May act as a 'molecular matchmaker', a protein that promotes the formation of a stable complex between two or more DNA-binding proteins in an ATP-dependent manner without itself being part of a final effector complex. This chain is DNA mismatch repair protein MutL, found in Rhizobium rhizogenes (strain K84 / ATCC BAA-868) (Agrobacterium radiobacter).